Consider the following 128-residue polypeptide: Sulfurtransferase TusD (128 aa).

The Cysteine persulfide intermediate role is filled by Cys-78.

This sequence belongs to the DsrE/TusD family. In terms of assembly, heterohexamer, formed by a dimer of trimers. The hexameric TusBCD complex contains 2 copies each of TusB, TusC and TusD. The TusBCD complex interacts with TusE.

It localises to the cytoplasm. In terms of biological role, part of a sulfur-relay system required for 2-thiolation of 5-methylaminomethyl-2-thiouridine (mnm(5)s(2)U) at tRNA wobble positions. Accepts sulfur from TusA and transfers it in turn to TusE. The polypeptide is Sulfurtransferase TusD (Cronobacter sakazakii (strain ATCC BAA-894) (Enterobacter sakazakii)).